Here is a 222-residue protein sequence, read N- to C-terminus: Octanoyltransferase (222 aa).

One can recognise a BPL/LPL catalytic domain in the interval 34 to 214; that stretch reads GEKNSTVLIL…EFSKHDEALV (181 aa). Substrate is bound by residues 72-79, 144-146, and 157-159; these read RGGKLTWH, AIG, and GVA. Cysteine 175 functions as the Acyl-thioester intermediate in the catalytic mechanism.

This sequence belongs to the LipB family.

It is found in the cytoplasm. The enzyme catalyses octanoyl-[ACP] + L-lysyl-[protein] = N(6)-octanoyl-L-lysyl-[protein] + holo-[ACP] + H(+). Its pathway is protein modification; protein lipoylation via endogenous pathway; protein N(6)-(lipoyl)lysine from octanoyl-[acyl-carrier-protein]: step 1/2. In terms of biological role, catalyzes the transfer of endogenously produced octanoic acid from octanoyl-acyl-carrier-protein onto the lipoyl domains of lipoate-dependent enzymes. Lipoyl-ACP can also act as a substrate although octanoyl-ACP is likely to be the physiological substrate. This Paenarthrobacter aurescens (strain TC1) protein is Octanoyltransferase.